We begin with the raw amino-acid sequence, 306 residues long: Homoserine O-acetyltransferase (306 aa).

Cysteine 142 (acyl-thioester intermediate) is an active-site residue. Substrate contacts are provided by lysine 163 and serine 192. Residue histidine 235 is the Proton acceptor of the active site. Glutamate 237 is a catalytic residue. Arginine 249 contacts substrate.

Belongs to the MetA family.

Its subcellular location is the cytoplasm. It catalyses the reaction L-homoserine + acetyl-CoA = O-acetyl-L-homoserine + CoA. Its pathway is amino-acid biosynthesis; L-methionine biosynthesis via de novo pathway; O-acetyl-L-homoserine from L-homoserine: step 1/1. Its function is as follows. Transfers an acetyl group from acetyl-CoA to L-homoserine, forming acetyl-L-homoserine. The polypeptide is Homoserine O-acetyltransferase (Clostridium botulinum (strain Alaska E43 / Type E3)).